We begin with the raw amino-acid sequence, 68 residues long: uncharacterized protein (68 aa).

This is an uncharacterized protein from Caenorhabditis elegans.